The following is a 1282-amino-acid chain: Crescerin-like protein che-12 (1282 aa).

TOG stretches follow at residues 33 to 240 and 268 to 515; these read DFDT…EHTE and PSLV…MDSF. HEAT repeat units lie at residues 59–96, 100–137, 162–209, 261–300, 308–345, 349–386, 388–421, and 424–461; these read QKKGELFKCIDKIICDDRWELQHQCIKFLVEAMPTFGS, YCMCFVMPNLIPKLVSNKVTVRKITHQAIATFLRLKPE, ELHH…FIGN, RLRFGIVPSLVCALIAEDTDANQRISGLEKMKQVVDQITP, PHLHSYLLMLSNVLEDLNFKVVVLALDIVRATGHHLKG, AHIQQFVNLVAKHFGNQKSVIKQIIMMTFMELFQNINP, TVGGCLRVFLENKNSRVREEVINIYTASLMTISP, and FNLQPLVNILVPMFHDVKKRVRLAAFEQLSVLAYLLNG. Residues 566 to 714 are disordered; it reads IQQQGQAEKP…RSFDDRPAKA (149 aa). Composition is skewed to low complexity over residues 575-592 and 633-644; these read PSFSLPQQPAQQASHQAQ and SAASNPNSSTSS. The span at 702–712 shows a compositional bias: basic and acidic residues; it reads DPPRSFDDRPA. 2 TOG regions span residues 800 to 1022 and 1066 to 1282; these read NMSV…ANVE and TELL…ALIR. 7 HEAT repeats span residues 838–875, 879–917, 919–953, 961–998, 1095–1132, 1177–1214, and 1219–1258; these read DNLKEVIIAILNECKNLRSSVSRVAIVTIGTVAQNLNS, SEMEKICAVLLSKSGDVSNAFIRDDATDSLNKLVKAATA, KALQGIILAGAKSKNNTIRSSCANFVYDIITIQGS, NALSNVLPVLLQFSRDQSPQVRNPGKQSLCFLSKDPNF, ASDTRLIEAFISRLGDTNGKVASCAMETYISTMGSMAK, IEPVSLLPAMTSATKKSNVKQRPFILTQYCELSKLAYK, and QVEVMALPLLWDSVKNSAPDVDNKKATQYLAKTLAKLIGE.

It belongs to the Crescerin family. Detected in a subset of amphid neurons that lack wing- or finger-like ciliary extensions. Likewise, detected in phasmid neurons.

Its subcellular location is the cell projection. The protein localises to the cilium. The protein resides in the perikaryon. It localises to the dendrite. Required for normal structure and function of sensory cilia on amphid neurons, especially for the formation of distal ciliary structures, but is less important for normal assembly of middle and basal ciliary structures. Plays a role in the organization of axoneme microtubule bundles in sensory cilia. Required for normal structure and function of the ASER neuron that mediates attraction to NaCl. Required for normal chemotaxis to NaCl. Required for normal avoidance response to high osmolarity. In contrast, is not required for normal chemotaxis to isoamyl alcohol. Does not play a role in intraflagella transport (IFT). Promotes dauer formation in response to pheromones such as the ascarosides ascr#2, ascr#3, ascr#5, ascr#8 and icas#9. In Caenorhabditis elegans, this protein is Crescerin-like protein che-12.